We begin with the raw amino-acid sequence, 116 residues long: MIRCLRLKVEGALEQIFTMAGLNIRDLLRDILIRWRDENYLGMVEGAGMFIEEIHPEGFSLYVHLDVRAVCLLEAIVQHLTNAIICSLAVEFDHATGGERVHLIDLHFEVLDNLLE.

It belongs to the adenoviridae E4 ORF3 family. As to quaternary structure, homodimer. Multimerizes through C-terminus tail by reciprocal or nonreciprocal interactions. Interacts with host PML isoform 2 C-terminal disordered region. Interacts with E1B-55k; this interaction is necessary for E1B 55 kDa protein to localize to the nuclear matrix fraction of the cell. May interact with host TRIM24, CREBBP, EP300, PRKDC and the MRN complex MRE11/RAD50/NBS1; these interactions may happen through nuclear bodies complexes.

It is found in the host nucleus. Forms a multivalent network in host nucleus that inhibits nuclear bodies and prevents antiviral cellular activities. The network is made of multimerized dimers and surrounds adenovirus replication centers and nucleolus. Plays a role in splicing of the major late transcript. Prevents viral genome concatemer formation. The protein is Early 4 ORF3 protein of Human adenovirus C serotype 2 (HAdV-2).